Here is a 416-residue protein sequence, read N- to C-terminus: S-adenosylmethionine synthase (416 aa).

H14 provides a ligand contact to ATP. A Mg(2+)-binding site is contributed by D16. E42 provides a ligand contact to K(+). Residues E55 and Q98 each coordinate L-methionine. The flexible loop stretch occupies residues 98–108 (QSADINQGVDR). Residues 164–166 (DAK), 240–241 (KF), D249, 255–256 (RK), A272, and K276 each bind ATP. D249 is a binding site for L-methionine. K280 provides a ligand contact to L-methionine.

The protein belongs to the AdoMet synthase family. As to quaternary structure, homotetramer; dimer of dimers. The cofactor is Mg(2+). Requires K(+) as cofactor.

It is found in the cytoplasm. It catalyses the reaction L-methionine + ATP + H2O = S-adenosyl-L-methionine + phosphate + diphosphate. It participates in amino-acid biosynthesis; S-adenosyl-L-methionine biosynthesis; S-adenosyl-L-methionine from L-methionine: step 1/1. Its function is as follows. Catalyzes the formation of S-adenosylmethionine (AdoMet) from methionine and ATP. The overall synthetic reaction is composed of two sequential steps, AdoMet formation and the subsequent tripolyphosphate hydrolysis which occurs prior to release of AdoMet from the enzyme. This chain is S-adenosylmethionine synthase, found in Flavobacterium johnsoniae (strain ATCC 17061 / DSM 2064 / JCM 8514 / BCRC 14874 / CCUG 350202 / NBRC 14942 / NCIMB 11054 / UW101) (Cytophaga johnsonae).